The chain runs to 268 residues: Tryptophan synthase alpha chain (268 aa).

Catalysis depends on proton acceptor residues Glu-49 and Asp-60.

Belongs to the TrpA family. As to quaternary structure, tetramer of two alpha and two beta chains.

It carries out the reaction (1S,2R)-1-C-(indol-3-yl)glycerol 3-phosphate + L-serine = D-glyceraldehyde 3-phosphate + L-tryptophan + H2O. The protein operates within amino-acid biosynthesis; L-tryptophan biosynthesis; L-tryptophan from chorismate: step 5/5. Functionally, the alpha subunit is responsible for the aldol cleavage of indoleglycerol phosphate to indole and glyceraldehyde 3-phosphate. This is Tryptophan synthase alpha chain from Shigella dysenteriae serotype 1 (strain Sd197).